A 124-amino-acid polypeptide reads, in one-letter code: Large ribosomal subunit protein bL20 (124 aa).

It belongs to the bacterial ribosomal protein bL20 family.

In terms of biological role, binds directly to 23S ribosomal RNA and is necessary for the in vitro assembly process of the 50S ribosomal subunit. It is not involved in the protein synthesizing functions of that subunit. This chain is Large ribosomal subunit protein bL20 (rplT), found in Mycoplasma genitalium (strain ATCC 33530 / DSM 19775 / NCTC 10195 / G37) (Mycoplasmoides genitalium).